The primary structure comprises 312 residues: tRNA dimethylallyltransferase (312 aa).

Residue 17–24 coordinates ATP; sequence GPTASGKT. 19 to 24 serves as a coordination point for substrate; that stretch reads TASGKT. Interaction with substrate tRNA regions lie at residues 42 to 45, 166 to 170, and 247 to 252; these read DSAL, QRLLR, and RCVGYR.

It belongs to the IPP transferase family. As to quaternary structure, monomer. Mg(2+) is required as a cofactor.

The catalysed reaction is adenosine(37) in tRNA + dimethylallyl diphosphate = N(6)-dimethylallyladenosine(37) in tRNA + diphosphate. In terms of biological role, catalyzes the transfer of a dimethylallyl group onto the adenine at position 37 in tRNAs that read codons beginning with uridine, leading to the formation of N6-(dimethylallyl)adenosine (i(6)A). This is tRNA dimethylallyltransferase from Sodalis glossinidius (strain morsitans).